The chain runs to 430 residues: Adenylosuccinate synthetase (430 aa).

Residues 13–19 and 41–43 each bind GTP; these read GDEGKGK and GHT. Aspartate 14 functions as the Proton acceptor in the catalytic mechanism. Aspartate 14 and glycine 41 together coordinate Mg(2+). IMP-binding positions include 14–17, 39–42, threonine 130, arginine 144, glutamine 225, threonine 240, and arginine 304; these read DEGK and NAGH. Residue histidine 42 is the Proton donor of the active site. A substrate-binding site is contributed by 300–306; the sequence is ASTGRPR. Residues arginine 306, 332 to 334, and 414 to 416 each bind GTP; these read KLD and STG.

The protein belongs to the adenylosuccinate synthetase family. As to quaternary structure, homodimer. It depends on Mg(2+) as a cofactor.

It localises to the cytoplasm. It carries out the reaction IMP + L-aspartate + GTP = N(6)-(1,2-dicarboxyethyl)-AMP + GDP + phosphate + 2 H(+). It participates in purine metabolism; AMP biosynthesis via de novo pathway; AMP from IMP: step 1/2. Its function is as follows. Plays an important role in the de novo pathway of purine nucleotide biosynthesis. Catalyzes the first committed step in the biosynthesis of AMP from IMP. The polypeptide is Adenylosuccinate synthetase (Xanthomonas oryzae pv. oryzae (strain MAFF 311018)).